Reading from the N-terminus, the 187-residue chain is UPF0301 protein YqgE (187 aa).

It belongs to the UPF0301 (AlgH) family.

The polypeptide is UPF0301 protein YqgE (Salmonella choleraesuis (strain SC-B67)).